Reading from the N-terminus, the 435-residue chain is Thiosulfate sulfurtransferase YnjE (435 aa).

The signal sequence occupies residues Met-1–Ala-23. Rhodanese domains are found at residues Gln-36–Lys-138, Pro-164–Arg-270, and His-304–Ala-425. Cys-385 serves as the catalytic Cysteine persulfide intermediate. Residue Arg-390 coordinates substrate.

In terms of assembly, monomer.

The protein localises to the periplasm. It catalyses the reaction thiosulfate + hydrogen cyanide = thiocyanate + sulfite + 2 H(+). The protein is Thiosulfate sulfurtransferase YnjE (ynjE) of Escherichia coli (strain K12).